Reading from the N-terminus, the 354-residue chain is Methylthioribose-1-phosphate isomerase (354 aa).

Asp-246 serves as the catalytic Proton donor.

It belongs to the eIF-2B alpha/beta/delta subunits family. MtnA subfamily.

Its subcellular location is the cytoplasm. It localises to the nucleus. The catalysed reaction is 5-(methylsulfanyl)-alpha-D-ribose 1-phosphate = 5-(methylsulfanyl)-D-ribulose 1-phosphate. The protein operates within amino-acid biosynthesis; L-methionine biosynthesis via salvage pathway; L-methionine from S-methyl-5-thio-alpha-D-ribose 1-phosphate: step 1/6. Functionally, catalyzes the interconversion of methylthioribose-1-phosphate (MTR-1-P) into methylthioribulose-1-phosphate (MTRu-1-P). The chain is Methylthioribose-1-phosphate isomerase (mri1) from Xenopus laevis (African clawed frog).